The sequence spans 360 residues: Phospho-N-acetylmuramoyl-pentapeptide-transferase (360 aa).

The next 10 helical transmembrane spans lie at 24-44, 69-89, 92-112, 133-153, 158-178, 199-219, 239-259, 263-283, 288-308, and 337-357; these read RAVMAALTALAFSLMFGPWTI, GTPTMGGSLILTAITVSTLLW, WANPYIWILLGVLLATGALGF, MVWQSSVAIIAGLALFYLAAN, ILIVPFFKQIALPLGVVGFLV, GLATFPVVLVAAGLAIFAYVS, VAIFCTAMCGACLGFLWFNAY, VFMGDVGALALGAALGTVAVI, FVLVIMGGLFVVEAVSVMLQV, and QVVVRFWIITIVLVLIGLSTL.

Belongs to the glycosyltransferase 4 family. MraY subfamily. Mg(2+) serves as cofactor.

Its subcellular location is the cell inner membrane. The catalysed reaction is UDP-N-acetyl-alpha-D-muramoyl-L-alanyl-gamma-D-glutamyl-meso-2,6-diaminopimeloyl-D-alanyl-D-alanine + di-trans,octa-cis-undecaprenyl phosphate = di-trans,octa-cis-undecaprenyl diphospho-N-acetyl-alpha-D-muramoyl-L-alanyl-D-glutamyl-meso-2,6-diaminopimeloyl-D-alanyl-D-alanine + UMP. The protein operates within cell wall biogenesis; peptidoglycan biosynthesis. In terms of biological role, catalyzes the initial step of the lipid cycle reactions in the biosynthesis of the cell wall peptidoglycan: transfers peptidoglycan precursor phospho-MurNAc-pentapeptide from UDP-MurNAc-pentapeptide onto the lipid carrier undecaprenyl phosphate, yielding undecaprenyl-pyrophosphoryl-MurNAc-pentapeptide, known as lipid I. The protein is Phospho-N-acetylmuramoyl-pentapeptide-transferase of Neisseria meningitidis serogroup C (strain 053442).